Reading from the N-terminus, the 438-residue chain is Probable trafficking protein particle complex subunit 13 homolog (438 aa).

It belongs to the TRAPPC13 family.

The sequence is that of Probable trafficking protein particle complex subunit 13 homolog from Drosophila melanogaster (Fruit fly).